The following is a 228-amino-acid chain: Thiamine-phosphate synthase (228 aa).

Residues 57–61 (QLRDK) and Asn89 each bind 4-amino-2-methyl-5-(diphosphooxymethyl)pyrimidine. Mg(2+) contacts are provided by Asp90 and Asp109. Ser128 contacts 4-amino-2-methyl-5-(diphosphooxymethyl)pyrimidine. 154-156 (TPS) is a 2-[(2R,5Z)-2-carboxy-4-methylthiazol-5(2H)-ylidene]ethyl phosphate binding site. Position 157 (Lys157) interacts with 4-amino-2-methyl-5-(diphosphooxymethyl)pyrimidine. Residues Gly185 and 205 to 206 (IS) each bind 2-[(2R,5Z)-2-carboxy-4-methylthiazol-5(2H)-ylidene]ethyl phosphate.

Belongs to the thiamine-phosphate synthase family. The cofactor is Mg(2+).

The catalysed reaction is 2-[(2R,5Z)-2-carboxy-4-methylthiazol-5(2H)-ylidene]ethyl phosphate + 4-amino-2-methyl-5-(diphosphooxymethyl)pyrimidine + 2 H(+) = thiamine phosphate + CO2 + diphosphate. The enzyme catalyses 2-(2-carboxy-4-methylthiazol-5-yl)ethyl phosphate + 4-amino-2-methyl-5-(diphosphooxymethyl)pyrimidine + 2 H(+) = thiamine phosphate + CO2 + diphosphate. It catalyses the reaction 4-methyl-5-(2-phosphooxyethyl)-thiazole + 4-amino-2-methyl-5-(diphosphooxymethyl)pyrimidine + H(+) = thiamine phosphate + diphosphate. Its pathway is cofactor biosynthesis; thiamine diphosphate biosynthesis; thiamine phosphate from 4-amino-2-methyl-5-diphosphomethylpyrimidine and 4-methyl-5-(2-phosphoethyl)-thiazole: step 1/1. Its function is as follows. Condenses 4-methyl-5-(beta-hydroxyethyl)thiazole monophosphate (THZ-P) and 2-methyl-4-amino-5-hydroxymethyl pyrimidine pyrophosphate (HMP-PP) to form thiamine monophosphate (TMP). This chain is Thiamine-phosphate synthase, found in Roseiflexus castenholzii (strain DSM 13941 / HLO8).